Consider the following 346-residue polypeptide: Heterogeneous nuclear ribonucleoprotein A1 (346 aa).

RRM domains lie at 23–123 (RKIF…GVRE) and 114–191 (KRLY…KGLS). Basic and acidic residues-rich tracts occupy residues 92 to 107 (TVDP…KNRS) and 189 to 215 (GLSK…RDGQ). Disordered stretches follow at residues 92–111 (TVDP…ESNV) and 189–346 (GLSK…NRNY). Gly residues-rich tracts occupy residues 216-296 (RGGY…GWGG) and 303-331 (GGWG…GGQS). The segment covering 332 to 346 (GAQQWAHAQGGNRNY) has biased composition (low complexity).

It is found in the nucleus. The protein localises to the chromosome. The protein resides in the telomere. In terms of biological role, this protein is a component of ribonucleosomes. Overexpression gradually increases telomere length, leading to increase lifespan. In Caenorhabditis elegans, this protein is Heterogeneous nuclear ribonucleoprotein A1.